The sequence spans 213 residues: Uridine kinase (213 aa).

Position 15–22 (15–22 (GASASGKS)) interacts with ATP.

The protein belongs to the uridine kinase family.

It localises to the cytoplasm. It carries out the reaction uridine + ATP = UMP + ADP + H(+). The enzyme catalyses cytidine + ATP = CMP + ADP + H(+). Its pathway is pyrimidine metabolism; CTP biosynthesis via salvage pathway; CTP from cytidine: step 1/3. It functions in the pathway pyrimidine metabolism; UMP biosynthesis via salvage pathway; UMP from uridine: step 1/1. The protein is Uridine kinase of Klebsiella pneumoniae (strain 342).